Consider the following 624-residue polypeptide: Probable Xaa-Pro aminopeptidase P (624 aa).

Asp414, Asp425, Glu530, and Glu544 together coordinate Mn(2+).

This sequence belongs to the peptidase M24B family. The cofactor is Mn(2+).

The catalysed reaction is Release of any N-terminal amino acid, including proline, that is linked to proline, even from a dipeptide or tripeptide.. In terms of biological role, catalyzes the removal of a penultimate prolyl residue from the N-termini of peptides. This Chaetomium globosum (strain ATCC 6205 / CBS 148.51 / DSM 1962 / NBRC 6347 / NRRL 1970) (Soil fungus) protein is Probable Xaa-Pro aminopeptidase P (AMPP).